We begin with the raw amino-acid sequence, 78 residues long: Protein GPR15LG (78 aa).

The first 24 residues, 1–24 (MRLLALSGLLCMLLLCFCIFSSEG), serve as a signal peptide directing secretion. Disulfide bonds link Cys37–Cys60 and Cys38–Cys57.

In terms of assembly, interacts with SUSD2; the interaction is direct. In terms of tissue distribution, highly abundant in the testis, colon, eye, and tongue. Detected in the epithelial layer of the colon, but not the small intestine.

The protein localises to the secreted. In terms of biological role, highly cationic protein that has multiple functions. Acts as a chemotactic factor that mediates lymphocytes recruitment to epithelia through binding and activation of the G-protein coupled receptor GPR15. May be a tumor suppressor; together with SUSD2 has a growth inhibitory effect on colon cancer cells which includes G1 cell cycle arrest. May regulate keratinocyte proliferation. In addition, through activation of Mas-related G protein-coupled receptors (MRGPRs) contributes to pruritogenesis by activating itch-selective sensory neurons and mast cells degranulation. Has antimicrobial activity against Gram-positive bacteria, including Staphylococcus aureus and Actinomyces spec., and Mycoplasma hominis and lentivirus. The chain is Protein GPR15LG (Gpr15lg) from Mus musculus (Mouse).